Reading from the N-terminus, the 179-residue chain is Inner membrane-spanning protein YciB (179 aa).

Transmembrane regions (helical) follow at residues 22–42 (IYAA…YSWV), 50–70 (MALI…FFHN), 76–96 (WKVT…QWVM), 121–141 (LAWA…AFWL), and 149–169 (FKVF…GIYI).

This sequence belongs to the YciB family.

Its subcellular location is the cell inner membrane. Its function is as follows. Plays a role in cell envelope biogenesis, maintenance of cell envelope integrity and membrane homeostasis. The protein is Inner membrane-spanning protein YciB of Klebsiella pneumoniae subsp. pneumoniae (strain ATCC 700721 / MGH 78578).